Reading from the N-terminus, the 154-residue chain is Ascorbate-specific PTS system EIIA component (154 aa).

The PTS EIIA type-2 domain maps to 6-150 (SLAENNSIRL…QEVLDLIDRT (145 aa)). The active-site Tele-phosphohistidine intermediate is the H68. H68 bears the Phosphohistidine mark.

It is found in the cytoplasm. In terms of biological role, the phosphoenolpyruvate-dependent sugar phosphotransferase system (sugar PTS), a major carbohydrate active transport system, catalyzes the phosphorylation of incoming sugar substrates concomitantly with their translocation across the cell membrane. The enzyme II UlaABC PTS system is involved in ascorbate transport. The sequence is that of Ascorbate-specific PTS system EIIA component (ulaC) from Salmonella typhi.